The sequence spans 1058 residues: Carbamoyl phosphate synthase large chain (1058 aa).

The segment at Met-1 to Glu-401 is carboxyphosphate synthetic domain. Residues Arg-129, Arg-169, Gly-175, Gly-176, Arg-208, Ile-210, Glu-215, Gly-241, Ile-242, His-243, Gln-284, and Glu-298 each contribute to the ATP site. The 195-residue stretch at Lys-133 to Val-327 folds into the ATP-grasp 1 domain. Mg(2+) is bound by residues Gln-284, Glu-298, and Asn-300. Mn(2+) contacts are provided by Gln-284, Glu-298, and Asn-300. The segment at Ile-402–Ser-546 is oligomerization domain. The carbamoyl phosphate synthetic domain stretch occupies residues Val-547–Asn-929. Residues Glu-671–Leu-861 form the ATP-grasp 2 domain. Positions 707, 746, 748, 752, 777, 778, 779, 780, 820, and 832 each coordinate ATP. Residues Gln-820, Glu-832, and Asn-834 each contribute to the Mg(2+) site. Mn(2+)-binding residues include Gln-820, Glu-832, and Asn-834. Residues Ser-930–Ile-1058 form the MGS-like domain. The allosteric domain stretch occupies residues Ser-930–Ile-1058.

It belongs to the CarB family. In terms of assembly, composed of two chains; the small (or glutamine) chain promotes the hydrolysis of glutamine to ammonia, which is used by the large (or ammonia) chain to synthesize carbamoyl phosphate. Tetramer of heterodimers (alpha,beta)4. Requires Mg(2+) as cofactor. The cofactor is Mn(2+).

The enzyme catalyses hydrogencarbonate + L-glutamine + 2 ATP + H2O = carbamoyl phosphate + L-glutamate + 2 ADP + phosphate + 2 H(+). It carries out the reaction hydrogencarbonate + NH4(+) + 2 ATP = carbamoyl phosphate + 2 ADP + phosphate + 2 H(+). The protein operates within amino-acid biosynthesis; L-arginine biosynthesis; carbamoyl phosphate from bicarbonate: step 1/1. It functions in the pathway pyrimidine metabolism; UMP biosynthesis via de novo pathway; (S)-dihydroorotate from bicarbonate: step 1/3. In terms of biological role, large subunit of the glutamine-dependent carbamoyl phosphate synthetase (CPSase). CPSase catalyzes the formation of carbamoyl phosphate from the ammonia moiety of glutamine, carbonate, and phosphate donated by ATP, constituting the first step of 2 biosynthetic pathways, one leading to arginine and/or urea and the other to pyrimidine nucleotides. The large subunit (synthetase) binds the substrates ammonia (free or transferred from glutamine from the small subunit), hydrogencarbonate and ATP and carries out an ATP-coupled ligase reaction, activating hydrogencarbonate by forming carboxy phosphate which reacts with ammonia to form carbamoyl phosphate. In Streptococcus pyogenes serotype M3 (strain SSI-1), this protein is Carbamoyl phosphate synthase large chain.